A 109-amino-acid polypeptide reads, in one-letter code: Class I hydrophobin 7 (109 aa).

An N-terminal signal peptide occupies residues 1 to 17; that stretch reads MFAQSFIITALAALAVA. 4 cysteine pairs are disulfide-bonded: cysteine 28–cysteine 88, cysteine 35–cysteine 82, cysteine 36–cysteine 69, and cysteine 89–cysteine 102.

The protein belongs to the fungal hydrophobin family. Self-assembles to form functional amyloid fibrils called rodlets. Self-assembly into fibrillar rodlets occurs spontaneously at hydrophobic:hydrophilic interfaces and the rodlets further associate laterally to form amphipathic monolayers.

It is found in the secreted. The protein localises to the cell wall. Aerial growth, conidiation, and dispersal of filamentous fungi in the environment rely upon a capability of their secreting small amphipathic proteins called hydrophobins (HPBs) with low sequence identity. Class I can self-assemble into an outermost layer of rodlet bundles on aerial cell surfaces, conferring cellular hydrophobicity that supports fungal growth, development and dispersal; whereas Class II form highly ordered films at water-air interfaces through intermolecular interactions but contribute nothing to the rodlet structure. Hydph7 is a class I hydrophobin involved in fruiting body development. This chain is Class I hydrophobin 7, found in Pleurotus ostreatus (strain PC15) (Oyster mushroom).